A 189-amino-acid polypeptide reads, in one-letter code: Probable UbiX-like flavin prenyltransferase (189 aa).

Residues 9 to 11 (GAS), S36, 87 to 90 (SMKT), and R122 each bind FMN.

Belongs to the UbiX/PAD1 family. YclB subfamily. As to quaternary structure, homododecamer.

The enzyme catalyses dimethylallyl phosphate + FMNH2 = prenylated FMNH2 + phosphate. Functionally, involved in the non-oxidative decarboxylation and detoxification of phenolic derivatives under anaerobic conditions. Flavin prenyltransferase that catalyzes the synthesis of the prenylated FMN cofactor (prenyl-FMN) for phenolic acid decarboxylase. This Sedimentibacter hydroxybenzoicus (Clostridium hydroxybenzoicum) protein is Probable UbiX-like flavin prenyltransferase.